The following is a 238-amino-acid chain: Aspartate/glutamate leucyltransferase (238 aa).

It belongs to the R-transferase family. Bpt subfamily.

Its subcellular location is the cytoplasm. It carries out the reaction N-terminal L-glutamyl-[protein] + L-leucyl-tRNA(Leu) = N-terminal L-leucyl-L-glutamyl-[protein] + tRNA(Leu) + H(+). It catalyses the reaction N-terminal L-aspartyl-[protein] + L-leucyl-tRNA(Leu) = N-terminal L-leucyl-L-aspartyl-[protein] + tRNA(Leu) + H(+). Its function is as follows. Functions in the N-end rule pathway of protein degradation where it conjugates Leu from its aminoacyl-tRNA to the N-termini of proteins containing an N-terminal aspartate or glutamate. This Shewanella sp. (strain MR-4) protein is Aspartate/glutamate leucyltransferase.